The primary structure comprises 308 residues: MAALCLLLLLSLAEAIDLRVPELPVIGLLDKDVILPCWFTPSEGFTPKNLSVFWKLPNQQQDYGFVLGEDLQENQSPQYKDRISLFHEELSKGNMSVLLQQVRLTDEGIYTCFVNVQNSSSASVSLQVGAPFTKPTLHLEPSEALKPGDQVTVTCHTYDGYPEANILWQNGEGQNMTENITTSQVANEKGLFHVQSSLSVILETSDTYTCLVFNPVLQDVTHASLTVTGQHLSFPPLVLWVTVGLSICLLCLLVALACVCRKHLKQTCEEEQENAGNEEHEENGELKTAMQPLKVTSPGEDDDAECLE.

An N-terminal signal peptide occupies residues 1–15 (MAALCLLLLLSLAEA). The Extracellular segment spans residues 16–236 (IDLRVPELPV…VTGQHLSFPP (221 aa)). Positions 21-125 (PELPVIGLLD…VQNSSSASVS (105 aa)) constitute an Ig-like V-type domain. 2 disulfides stabilise this stretch: Cys-37–Cys-112 and Cys-155–Cys-210. One can recognise an Ig-like C2-type domain in the interval 135-228 (PTLHLEPSEA…DVTHASLTVT (94 aa)). Residues 237 to 257 (LVLWVTVGLSICLLCLLVALA) traverse the membrane as a helical segment. Topologically, residues 258–308 (CVCRKHLKQTCEEEQENAGNEEHEENGELKTAMQPLKVTSPGEDDDAECLE) are cytoplasmic. The segment at 270–308 (EEQENAGNEEHEENGELKTAMQPLKVTSPGEDDDAECLE) is disordered. A compositionally biased stretch (acidic residues) spans 299–308 (GEDDDAECLE).

This sequence belongs to the immunoglobulin superfamily. BTN/MOG family.

Its subcellular location is the membrane. Its function is as follows. Modulates immune responses. The chain is CD276 antigen homolog (cd276) from Xenopus laevis (African clawed frog).